We begin with the raw amino-acid sequence, 180 residues long: Symerythrin (180 aa).

The 3-(L-phenylalan-2'-yl)-L-valine (Phe-Val) cross-link spans 17-127 (FQDAVSHNNT…RRALETALEV (111 aa)). Residues 21–180 (VSHNNTDANA…RALENLLEVA (160 aa)) form the Ferritin-like diiron domain. Residues Glu-37, Glu-40, Glu-71, Glu-128, Glu-131, Glu-162, and His-165 each coordinate Fe(3+).

As to quaternary structure, monomer. The cofactor is Fe(3+).

It localises to the plastid. The protein localises to the cyanelle. Its function is as follows. Exhibits oxidase-like and peroxidase-like activities in vitro. This Cyanophora paradoxa protein is Symerythrin.